Reading from the N-terminus, the 121-residue chain is Large ribosomal subunit protein uL18 (121 aa).

It belongs to the universal ribosomal protein uL18 family. As to quaternary structure, part of the 50S ribosomal subunit; part of the 5S rRNA/L5/L18/L25 subcomplex. Contacts the 5S and 23S rRNAs.

Its function is as follows. This is one of the proteins that bind and probably mediate the attachment of the 5S RNA into the large ribosomal subunit, where it forms part of the central protuberance. In Burkholderia ambifaria (strain MC40-6), this protein is Large ribosomal subunit protein uL18.